Consider the following 512-residue polypeptide: Putative UDP-glucuronosyltransferase ugt-55 (512 aa).

Positions 1–22 are cleaved as a signal peptide; sequence MQLLTLPTLIFIFLNYGTPCLS. The helical transmembrane segment at 487–507 threads the bilayer; sequence ILLYLDSIAMFTLTLLTMILI.

Belongs to the UDP-glycosyltransferase family.

It localises to the membrane. The enzyme catalyses glucuronate acceptor + UDP-alpha-D-glucuronate = acceptor beta-D-glucuronoside + UDP + H(+). The sequence is that of Putative UDP-glucuronosyltransferase ugt-55 (ugt-55) from Caenorhabditis elegans.